Reading from the N-terminus, the 446-residue chain is Phosphoglucosamine mutase (446 aa).

Residue Ser-100 is the Phosphoserine intermediate of the active site. Mg(2+) is bound by residues Ser-100, Asp-241, Asp-243, and Asp-245. Phosphoserine is present on Ser-100.

It belongs to the phosphohexose mutase family. Requires Mg(2+) as cofactor. Post-translationally, activated by phosphorylation.

It catalyses the reaction alpha-D-glucosamine 1-phosphate = D-glucosamine 6-phosphate. In terms of biological role, catalyzes the conversion of glucosamine-6-phosphate to glucosamine-1-phosphate. This is Phosphoglucosamine mutase from Methylorubrum populi (strain ATCC BAA-705 / NCIMB 13946 / BJ001) (Methylobacterium populi).